A 267-amino-acid polypeptide reads, in one-letter code: 2-keto-3-deoxy-L-rhamnonate aldolase (267 aa).

His-49 (proton acceptor) is an active-site residue. Position 151 (Gln-151) interacts with substrate. Residue Glu-153 participates in Mg(2+) binding. Residues Ala-178 and Asp-179 each contribute to the substrate site. Mg(2+) is bound at residue Asp-179.

It belongs to the HpcH/HpaI aldolase family. KDR aldolase subfamily. In terms of assembly, homohexamer. Requires Mg(2+) as cofactor.

It carries out the reaction 2-dehydro-3-deoxy-L-rhamnonate = (S)-lactaldehyde + pyruvate. Its function is as follows. Catalyzes the reversible retro-aldol cleavage of 2-keto-3-deoxy-L-rhamnonate (KDR) to pyruvate and lactaldehyde. The sequence is that of 2-keto-3-deoxy-L-rhamnonate aldolase from Shigella boydii serotype 4 (strain Sb227).